Consider the following 607-residue polypeptide: Elongation factor 4 (607 aa).

The tr-type G domain occupies 11-193 (EKIRNFSIIA…QIVEKVPAPQ (183 aa)). GTP contacts are provided by residues 23 to 28 (DHGKST) and 140 to 143 (NKID).

The protein belongs to the TRAFAC class translation factor GTPase superfamily. Classic translation factor GTPase family. LepA subfamily.

It localises to the cell membrane. The enzyme catalyses GTP + H2O = GDP + phosphate + H(+). Its function is as follows. Required for accurate and efficient protein synthesis under certain stress conditions. May act as a fidelity factor of the translation reaction, by catalyzing a one-codon backward translocation of tRNAs on improperly translocated ribosomes. Back-translocation proceeds from a post-translocation (POST) complex to a pre-translocation (PRE) complex, thus giving elongation factor G a second chance to translocate the tRNAs correctly. Binds to ribosomes in a GTP-dependent manner. The protein is Elongation factor 4 of Lactococcus lactis subsp. lactis (strain IL1403) (Streptococcus lactis).